A 335-amino-acid chain; its full sequence is Methionine import ATP-binding protein MetN (335 aa).

An ABC transporter domain is found at 2 to 241; it reads IEFQRLHKSY…PKHVTTRRFV (240 aa). 38–45 is a binding site for ATP; that stretch reads GHSGAGKS.

It belongs to the ABC transporter superfamily. Methionine importer (TC 3.A.1.24) family. The complex is composed of two ATP-binding proteins (MetN), two transmembrane proteins (MetI) and a solute-binding protein (MetQ).

It is found in the cell inner membrane. The enzyme catalyses L-methionine(out) + ATP + H2O = L-methionine(in) + ADP + phosphate + H(+). The catalysed reaction is D-methionine(out) + ATP + H2O = D-methionine(in) + ADP + phosphate + H(+). Functionally, part of the ABC transporter complex MetNIQ involved in methionine import. Responsible for energy coupling to the transport system. The chain is Methionine import ATP-binding protein MetN from Xanthomonas oryzae pv. oryzae (strain MAFF 311018).